The chain runs to 380 residues: DNA primase small subunit PriS (380 aa).

Catalysis depends on residues Asp103, Asp105, and Asp284.

This sequence belongs to the eukaryotic-type primase small subunit family. In terms of assembly, heterodimer of a small subunit (PriS) and a large subunit (PriL). The cofactor is Mg(2+). Requires Mn(2+) as cofactor.

Catalytic subunit of DNA primase, an RNA polymerase that catalyzes the synthesis of short RNA molecules used as primers for DNA polymerase during DNA replication. The small subunit contains the primase catalytic core and has DNA synthesis activity on its own. Binding to the large subunit stabilizes and modulates the activity, increasing the rate of DNA synthesis while decreasing the length of the DNA fragments, and conferring RNA synthesis capability. The DNA polymerase activity may enable DNA primase to also catalyze primer extension after primer synthesis. May also play a role in DNA repair. The chain is DNA primase small subunit PriS from Methanocorpusculum labreanum (strain ATCC 43576 / DSM 4855 / Z).